Reading from the N-terminus, the 208-residue chain is Ribosomal RNA small subunit methyltransferase G (208 aa).

S-adenosyl-L-methionine is bound by residues G76, L81, 127–128, and R142; that span reads VE.

Belongs to the methyltransferase superfamily. RNA methyltransferase RsmG family.

Its subcellular location is the cytoplasm. The catalysed reaction is guanosine(527) in 16S rRNA + S-adenosyl-L-methionine = N(7)-methylguanosine(527) in 16S rRNA + S-adenosyl-L-homocysteine. Functionally, specifically methylates the N7 position of guanine in position 527 of 16S rRNA. The chain is Ribosomal RNA small subunit methyltransferase G from Legionella pneumophila subsp. pneumophila (strain Philadelphia 1 / ATCC 33152 / DSM 7513).